Here is a 337-residue protein sequence, read N- to C-terminus: Anthranilate phosphoribosyltransferase (337 aa).

5-phospho-alpha-D-ribose 1-diphosphate contacts are provided by residues glycine 80, glycine 83–aspartate 84, threonine 88, asparagine 90–threonine 93, lysine 108–serine 116, and serine 120. Anthranilate is bound at residue glycine 80. Serine 92 contacts Mg(2+). Residue asparagine 111 coordinates anthranilate. Arginine 166 contributes to the anthranilate binding site. Mg(2+) is bound by residues aspartate 224 and glutamate 225.

Belongs to the anthranilate phosphoribosyltransferase family. Homodimer. Mg(2+) is required as a cofactor.

The enzyme catalyses N-(5-phospho-beta-D-ribosyl)anthranilate + diphosphate = 5-phospho-alpha-D-ribose 1-diphosphate + anthranilate. Its pathway is amino-acid biosynthesis; L-tryptophan biosynthesis; L-tryptophan from chorismate: step 2/5. Its function is as follows. Catalyzes the transfer of the phosphoribosyl group of 5-phosphorylribose-1-pyrophosphate (PRPP) to anthranilate to yield N-(5'-phosphoribosyl)-anthranilate (PRA). The sequence is that of Anthranilate phosphoribosyltransferase from Anaeromyxobacter sp. (strain Fw109-5).